Here is a 186-residue protein sequence, read N- to C-terminus: ATP synthase subunit delta (186 aa).

This sequence belongs to the ATPase delta chain family. As to quaternary structure, F-type ATPases have 2 components, F(1) - the catalytic core - and F(0) - the membrane proton channel. F(1) has five subunits: alpha(3), beta(3), gamma(1), delta(1), epsilon(1). CF(0) has four main subunits: a(1), b(1), b'(1) and c(10-14). The alpha and beta chains form an alternating ring which encloses part of the gamma chain. F(1) is attached to F(0) by a central stalk formed by the gamma and epsilon chains, while a peripheral stalk is formed by the delta, b and b' chains.

Its subcellular location is the cell inner membrane. In terms of biological role, f(1)F(0) ATP synthase produces ATP from ADP in the presence of a proton or sodium gradient. F-type ATPases consist of two structural domains, F(1) containing the extramembraneous catalytic core and F(0) containing the membrane proton channel, linked together by a central stalk and a peripheral stalk. During catalysis, ATP synthesis in the catalytic domain of F(1) is coupled via a rotary mechanism of the central stalk subunits to proton translocation. Functionally, this protein is part of the stalk that links CF(0) to CF(1). It either transmits conformational changes from CF(0) to CF(1) or is implicated in proton conduction. This is ATP synthase subunit delta from Rhodospirillum centenum (strain ATCC 51521 / SW).